The chain runs to 232 residues: 2,3,4,5-tetrahydropyridine-2,6-dicarboxylate N-acetyltransferase (232 aa).

It belongs to the transferase hexapeptide repeat family. DapH subfamily.

The catalysed reaction is (S)-2,3,4,5-tetrahydrodipicolinate + acetyl-CoA + H2O = L-2-acetamido-6-oxoheptanedioate + CoA. It participates in amino-acid biosynthesis; L-lysine biosynthesis via DAP pathway; LL-2,6-diaminopimelate from (S)-tetrahydrodipicolinate (acetylase route): step 1/3. Catalyzes the transfer of an acetyl group from acetyl-CoA to tetrahydrodipicolinate. The chain is 2,3,4,5-tetrahydropyridine-2,6-dicarboxylate N-acetyltransferase from Streptococcus uberis (strain ATCC BAA-854 / 0140J).